Here is a 197-residue protein sequence, read N- to C-terminus: Imidazoleglycerol-phosphate dehydratase (197 aa).

The protein belongs to the imidazoleglycerol-phosphate dehydratase family.

Its subcellular location is the cytoplasm. It carries out the reaction D-erythro-1-(imidazol-4-yl)glycerol 3-phosphate = 3-(imidazol-4-yl)-2-oxopropyl phosphate + H2O. Its pathway is amino-acid biosynthesis; L-histidine biosynthesis; L-histidine from 5-phospho-alpha-D-ribose 1-diphosphate: step 6/9. The protein is Imidazoleglycerol-phosphate dehydratase of Xanthobacter autotrophicus (strain ATCC BAA-1158 / Py2).